Consider the following 421-residue polypeptide: Tyrosine-protein phosphatase non-receptor type 20 (421 aa).

The interval 1–58 (MSSPGNVRQKHGRDNDEHEGDSDDLNLQKSLPSSSQQKTPTKPVFGNKVNSESVKTSH) is disordered. Residues 27-41 (LQKSLPSSSQQKTPT) show a composition bias toward low complexity. Polar residues predominate over residues 48 to 58 (KVNSESVKTSH). Residue Ser76 is modified to Phosphoserine. The segment at 93-116 (RWSSVDPESAGPSKTVSTVLSESS) is disordered. Polar residues predominate over residues 104–116 (PSKTVSTVLSESS). Ser122 bears the Phosphoserine mark. One can recognise a Tyrosine-protein phosphatase domain in the interval 160–413 (IIREFLELEE…QFCYEIVLEV (254 aa)). Residues Asp324, 354 to 360 (CSAGVGR), and Gln398 contribute to the substrate site. Catalysis depends on Cys354, which acts as the Phosphocysteine intermediate.

This sequence belongs to the protein-tyrosine phosphatase family. Non-receptor class subfamily.

Its subcellular location is the nucleus. It is found in the cytoplasm. The protein localises to the cytoskeleton. The protein resides in the microtubule organizing center. It localises to the centrosome. The catalysed reaction is O-phospho-L-tyrosyl-[protein] + H2O = L-tyrosyl-[protein] + phosphate. Tyrosine-protein phosphatase targeted to sites of actin polymerization in response of varied extracellular stimuli. Has tyrosine phosphatase activity towards various tyrosyl phosphorylated substrates. The chain is Tyrosine-protein phosphatase non-receptor type 20 (Ptpn20) from Rattus norvegicus (Rat).